The following is a 20-amino-acid chain: Brevinin-1SPb (20 aa).

A disulfide bridge connects residues cysteine 14 and cysteine 20.

In terms of tissue distribution, expressed by the skin glands.

The protein localises to the secreted. In terms of biological role, antimicrobial peptide with activity against Gram-negative and Gram-positive bacteria (MIC=50 uM against E.coli, MIC=6 uM against S.aureus) and fungi (MIC=13 uM against C.albicans). Shows hemolytic activity on human erythrocytes (HC(50)=25 uM). The chain is Brevinin-1SPb from Lithobates septentrionalis (Mink frog).